Here is an 860-residue protein sequence, read N- to C-terminus: Probable inorganic carbon transporter subunit DabA (860 aa).

Positions 1-32 are disordered; sequence MTTTSLGADAAHTHAMVPSAIPPEGSDAAGPD. Zn(2+) is bound by residues cysteine 369, aspartate 371, histidine 551, and cysteine 566.

The protein belongs to the inorganic carbon transporter (TC 9.A.2) DabA family. In terms of assembly, forms a complex with DabB. It depends on Zn(2+) as a cofactor.

It is found in the cell inner membrane. Its function is as follows. Part of an energy-coupled inorganic carbon pump. In Ralstonia pickettii (strain 12D), this protein is Probable inorganic carbon transporter subunit DabA.